The following is a 151-amino-acid chain: Ribosome maturation factor RimP (151 aa).

It belongs to the RimP family.

Its subcellular location is the cytoplasm. In terms of biological role, required for maturation of 30S ribosomal subunits. This chain is Ribosome maturation factor RimP, found in Saccharophagus degradans (strain 2-40 / ATCC 43961 / DSM 17024).